We begin with the raw amino-acid sequence, 233 residues long: uncharacterized protein (233 aa).

3 consecutive transmembrane segments (helical) span residues 4 to 24, 35 to 55, and 66 to 86; these read LAIL…NHDT, FGQL…ILQS, and IAIW…RFEL.

The protein localises to the cell membrane. This is an uncharacterized protein from Sinorhizobium sp.